The sequence spans 659 residues: Siderophore transporter fer7 (659 aa).

Positions 1–62 (MSNQAQDQPE…ADASSAREGQ (62 aa)) are disordered. Residues 31–41 (QSVSAHGNTSL) show a composition bias toward polar residues. The N-linked (GlcNAc...) asparagine glycan is linked to asparagine 38. Residues 42-54 (NKKDRVSAVRDAD) show a composition bias toward basic and acidic residues. The next 8 helical transmembrane spans lie at 79-99 (NSPI…CFAL), 121-141 (LFGV…PFIA), 150-170 (QTAY…VASA), 208-228 (GVVT…GNLI), 245-265 (GMFA…LMYV), 316-336 (LVGL…FSIY), 348-368 (IIAM…WEIL), and 379-399 (VWYN…FMGG). Asparagine 415 carries N-linked (GlcNAc...) asparagine glycosylation. Transmembrane regions (helical) follow at residues 424-444 (VVNA…GFYL) and 451-471 (KFLQ…YLYG). N-linked (GlcNAc...) asparagine glycosylation is present at asparagine 475. The next 3 membrane-spanning stretches (helical) occupy residues 478–498 (TMVV…SVVG), 528–548 (AIGS…YLAA), and 590–610 (PIFI…LLMP).

The protein belongs to the major facilitator superfamily.

It is found in the membrane. Siderophore transporter; part of the gene cluster that mediates the biosynthesis of siderophore ferrichrome A which is contributing to organismal virulence. The chain is Siderophore transporter fer7 from Mycosarcoma maydis (Corn smut fungus).